We begin with the raw amino-acid sequence, 266 residues long: Non-structural maintenance of chromosomes element 1 homolog (266 aa).

An interaction with NSMCE3 region spans residues 1 to 102 (MQGSTRRMSV…SISKMATDFA (102 aa)). Residues 191 to 232 (CNICHSLLIQGQSCETCGIRMHLPCVAKYFQSNAEPRCPHCN) form an RING-type; atypical zinc finger. The interval 245-266 (PEKERESGVSKSNKKSLRSRQH) is disordered. A Phosphoserine modification is found at Ser251. Residues 256–266 (SNKKSLRSRQH) are compositionally biased toward basic residues.

This sequence belongs to the NSE1 family. As to quaternary structure, component of the SMC5-SMC6 complex which consists at least of SMC5, SMC6, NSMCE2, NSMCE1, NSMCE4A or EID3 and NSMCE3. NSMCE1, NSMCE4A or EID3 and NSMCE3 probably form a subcomplex that bridges the head domains of the SMC5-SMC6 heterodimer. Interacts with NSMCE3. In terms of processing, ubiquitinated.

It localises to the nucleus. Its subcellular location is the chromosome. The protein localises to the telomere. It carries out the reaction S-ubiquitinyl-[E2 ubiquitin-conjugating enzyme]-L-cysteine + [acceptor protein]-L-lysine = [E2 ubiquitin-conjugating enzyme]-L-cysteine + N(6)-ubiquitinyl-[acceptor protein]-L-lysine.. Its function is as follows. RING-type zinc finger-containing E3 ubiquitin ligase that assembles with melanoma antigen protein (MAGE) to catalyze the direct transfer of ubiquitin from E2 ubiquitin-conjugating enzyme to a specific substrate. Within MAGE-RING ubiquitin ligase complex, MAGE stimulates and specifies ubiquitin ligase activity likely through recruitment and/or stabilization of the E2 ubiquitin-conjugating enzyme at the E3:substrate complex. Involved in maintenance of genome integrity, DNA damage response and DNA repair. NSMCE3/MAGEG1 and NSMCE1 ubiquitin ligase are components of SMC5-SMC6 complex and may positively regulate homologous recombination-mediated DNA repair. This chain is Non-structural maintenance of chromosomes element 1 homolog (NSMCE1), found in Pongo abelii (Sumatran orangutan).